We begin with the raw amino-acid sequence, 354 residues long: uncharacterized protein (354 aa).

Disordered stretches follow at residues 1 to 74 (MGTK…ENCR) and 87 to 115 (SESG…QRAS). N6-acetyllysine is present on Lys-19. The segment covering 32–41 (EGPSSNSSFH) has biased composition (low complexity). Positions 45–54 (EEGTDLEGDM) are enriched in acidic residues. Ser-115 and Ser-174 each carry phosphoserine. Residues 182-199 (QGSSQDLPMQANLSQSNE) show a composition bias toward polar residues. Disordered stretches follow at residues 182-208 (QGSS…GRDR) and 235-298 (QVAD…DELS). Phosphotyrosine is present on Tyr-291. Phosphoserine is present on Ser-292.

This is an uncharacterized protein from Mus musculus (Mouse).